Reading from the N-terminus, the 108-residue chain is Phosphoribosyl-AMP cyclohydrolase (108 aa).

Aspartate 78 contacts Mg(2+). Cysteine 79 is a Zn(2+) binding site. Mg(2+)-binding residues include aspartate 80 and aspartate 82. 2 residues coordinate Zn(2+): cysteine 95 and cysteine 102.

The protein belongs to the PRA-CH family. Homodimer. Mg(2+) serves as cofactor. The cofactor is Zn(2+).

Its subcellular location is the cytoplasm. The enzyme catalyses 1-(5-phospho-beta-D-ribosyl)-5'-AMP + H2O = 1-(5-phospho-beta-D-ribosyl)-5-[(5-phospho-beta-D-ribosylamino)methylideneamino]imidazole-4-carboxamide. Its pathway is amino-acid biosynthesis; L-histidine biosynthesis; L-histidine from 5-phospho-alpha-D-ribose 1-diphosphate: step 3/9. Functionally, catalyzes the hydrolysis of the adenine ring of phosphoribosyl-AMP. This chain is Phosphoribosyl-AMP cyclohydrolase, found in Cenarchaeum symbiosum (strain A).